The primary structure comprises 500 residues: Beta-glucosidase 2 (500 aa).

Residues 1–24 (MGAAAAAGFFFVLLFLSVQGGAVG) form the signal peptide. Gln44 and His144 together coordinate a beta-D-glucoside. The active-site Proton donor is Glu190. Cysteines 209 and 218 form a disulfide. Asn222 carries an N-linked (GlcNAc...) asparagine glycan. The a beta-D-glucoside site is built by Tyr334 and Glu403. The active-site Nucleophile is the Glu403. A glycan (N-linked (GlcNAc...) asparagine) is linked at Asn410. Trp445 serves as a coordination point for a beta-D-glucoside.

This sequence belongs to the glycosyl hydrolase 1 family.

The catalysed reaction is Hydrolysis of terminal, non-reducing beta-D-glucosyl residues with release of beta-D-glucose.. This chain is Beta-glucosidase 2 (BGLU2), found in Oryza sativa subsp. japonica (Rice).